A 331-amino-acid polypeptide reads, in one-letter code: Holliday junction branch migration complex subunit RuvB (331 aa).

The tract at residues 1 to 186 (MAKTMMQDRL…FGIVQRLEFY (186 aa)) is large ATPase domain (RuvB-L). ATP is bound by residues I25, R26, G67, K70, T71, T72, 133-135 (EDF), R176, Y186, and R223. Position 71 (T71) interacts with Mg(2+). The interval 187 to 257 (NIADLTTIVS…IAGSALDMLA (71 aa)) is small ATPAse domain (RuvB-S). The tract at residues 260–331 (RRGLDHLDRR…LTQMAIDQML (72 aa)) is head domain (RuvB-H). Residues R296, R315, and R320 each contribute to the DNA site.

Belongs to the RuvB family. As to quaternary structure, homohexamer. Forms an RuvA(8)-RuvB(12)-Holliday junction (HJ) complex. HJ DNA is sandwiched between 2 RuvA tetramers; dsDNA enters through RuvA and exits via RuvB. An RuvB hexamer assembles on each DNA strand where it exits the tetramer. Each RuvB hexamer is contacted by two RuvA subunits (via domain III) on 2 adjacent RuvB subunits; this complex drives branch migration. In the full resolvosome a probable DNA-RuvA(4)-RuvB(12)-RuvC(2) complex forms which resolves the HJ.

It is found in the cytoplasm. It carries out the reaction ATP + H2O = ADP + phosphate + H(+). The RuvA-RuvB-RuvC complex processes Holliday junction (HJ) DNA during genetic recombination and DNA repair, while the RuvA-RuvB complex plays an important role in the rescue of blocked DNA replication forks via replication fork reversal (RFR). RuvA specifically binds to HJ cruciform DNA, conferring on it an open structure. The RuvB hexamer acts as an ATP-dependent pump, pulling dsDNA into and through the RuvAB complex. RuvB forms 2 homohexamers on either side of HJ DNA bound by 1 or 2 RuvA tetramers; 4 subunits per hexamer contact DNA at a time. Coordinated motions by a converter formed by DNA-disengaged RuvB subunits stimulates ATP hydrolysis and nucleotide exchange. Immobilization of the converter enables RuvB to convert the ATP-contained energy into a lever motion, pulling 2 nucleotides of DNA out of the RuvA tetramer per ATP hydrolyzed, thus driving DNA branch migration. The RuvB motors rotate together with the DNA substrate, which together with the progressing nucleotide cycle form the mechanistic basis for DNA recombination by continuous HJ branch migration. Branch migration allows RuvC to scan DNA until it finds its consensus sequence, where it cleaves and resolves cruciform DNA. In Psychrobacter cryohalolentis (strain ATCC BAA-1226 / DSM 17306 / VKM B-2378 / K5), this protein is Holliday junction branch migration complex subunit RuvB.